A 428-amino-acid polypeptide reads, in one-letter code: Kynureninase (428 aa).

Pyridoxal 5'-phosphate-binding positions include Thr104, Thr105, 132 to 135 (FPSD), Asp213, His216, and Tyr238. Lys239 carries the N6-(pyridoxal phosphate)lysine modification. Positions 267 and 295 each coordinate pyridoxal 5'-phosphate.

The protein belongs to the kynureninase family. Homodimer. Requires pyridoxal 5'-phosphate as cofactor.

It carries out the reaction L-kynurenine + H2O = anthranilate + L-alanine + H(+). The enzyme catalyses 3-hydroxy-L-kynurenine + H2O = 3-hydroxyanthranilate + L-alanine + H(+). It participates in amino-acid degradation; L-kynurenine degradation; L-alanine and anthranilate from L-kynurenine: step 1/1. It functions in the pathway cofactor biosynthesis; NAD(+) biosynthesis; quinolinate from L-kynurenine: step 2/3. In terms of biological role, catalyzes the cleavage of L-kynurenine (L-Kyn) and L-3-hydroxykynurenine (L-3OHKyn) into anthranilic acid (AA) and 3-hydroxyanthranilic acid (3-OHAA), respectively. The chain is Kynureninase from Bacillus cereus (strain ATCC 10987 / NRS 248).